Reading from the N-terminus, the 522-residue chain is Perilipin-1 (522 aa).

The residue at position 81 (serine 81) is a Phosphoserine. At threonine 85 the chain carries Phosphothreonine. Phosphoserine is present on residues serine 126, serine 130, serine 132, serine 137, and serine 174. Disordered regions lie at residues 195–217 (DKEE…AKPS) and 287–318 (LAAA…EENK). Acidic residues predominate over residues 291-314 (QEEDHEDQTDTEGEDTEEEEELET). The required for interaction with CIDEC stretch occupies residues 291–319 (QEEDHEDQTDTEGEDTEEEEELETEENKF). Threonine 299 and threonine 301 each carry phosphothreonine. Phosphoserine occurs at positions 382, 384, and 408. A disordered region spans residues 413 to 522 (ESEFRDIDNP…THYSQLRKKS (110 aa)). Positions 414–435 (SEFRDIDNPPAEVERREAERRA) are enriched in basic and acidic residues. Phosphoserine is present on residues serine 436, serine 497, and serine 499.

Belongs to the perilipin family. In terms of assembly, interacts with ABHD5. Interacts with CIDEC. Interacts with AQP7. In terms of processing, major cAMP-dependent protein kinase-substrate in adipocytes, also dephosphorylated by PP1. When phosphorylated, may be maximally sensitive to HSL and when unphosphorylated, may play a role in the inhibition of lipolysis, by acting as a barrier in lipid droplet. Detected in adipocytes from white adipose tissue (at protein level). Detected in visceral adipose tissue and mammary gland.

It localises to the endoplasmic reticulum. The protein localises to the lipid droplet. Modulator of adipocyte lipid metabolism. Coats lipid storage droplets to protect them from breakdown by hormone-sensitive lipase (HSL). Its absence may result in leanness. Plays a role in unilocular lipid droplet formation by activating CIDEC. Their interaction promotes lipid droplet enlargement and directional net neutral lipid transfer. May modulate lipolysis and triglyceride levels. This Homo sapiens (Human) protein is Perilipin-1 (PLIN1).